Reading from the N-terminus, the 445-residue chain is Cyclic GMP-AMP synthase-like receptor 1 (445 aa).

Residues glutamate 70, aspartate 72, and aspartate 186 each contribute to the Mg(2+) site. Residue 70–72 (EYD) participates in ATP binding. Residues aspartate 186 and 232–239 (RTSFYEAE) contribute to the GTP site. Residues 236–239 (YEAE), lysine 257, and 270–274 (SYHIK) each bind ATP. Residues 357–445 (LNDDNENSVH…KSKTTTPKPS (89 aa)) form a disordered region. Positions 377–398 (QKMEKTSTESEQKKPTETKPNA) are enriched in basic and acidic residues. Over residues 435-445 (TKSKTTTPKPS) the composition is skewed to low complexity.

The protein belongs to the mab-21 family. Requires Mg(2+) as cofactor. It depends on Mn(2+) as a cofactor.

The enzyme catalyses GTP + ATP = 3',2'-cGAMP + 2 diphosphate. It carries out the reaction GTP + ATP = pppA(2'-5')pG + diphosphate. The catalysed reaction is pppA(2'-5')pG = 3',2'-cGAMP + diphosphate. Its activity is regulated as follows. The enzyme activity is specifically activated by double-stranded RNA (dsRNA). Its function is as follows. Nucleotidyltransferase that catalyzes the formation of cyclic GMP-AMP (3',2'-cGAMP) from ATP and GTP and plays a key role in innate immunity. Synthesizes 3',2'-cGAMP in a two-step reaction through production of the linear intermediate pppA(2'-5')pG. Acts as a key sensor of double-stranded RNA (dsRNA), the presence of dsRNA in the cytoplasm being a danger signal that triggers the immune responses. Directly binds dsRNA, activating the nucleotidyltransferase activity, leading to synthesis of 3',2'-cGAMP, a second messenger that binds to and activates Sting, thereby triggering the antiviral immune response via activation of the NF-kappa-B transcription factor Rel (Relish). The sequence is that of Cyclic GMP-AMP synthase-like receptor 1 from Drosophila erecta (Fruit fly).